The following is a 181-amino-acid chain: Adenine phosphoribosyltransferase (181 aa).

This sequence belongs to the purine/pyrimidine phosphoribosyltransferase family. In terms of assembly, homodimer.

The protein localises to the cytoplasm. The catalysed reaction is AMP + diphosphate = 5-phospho-alpha-D-ribose 1-diphosphate + adenine. Its pathway is purine metabolism; AMP biosynthesis via salvage pathway; AMP from adenine: step 1/1. In terms of biological role, catalyzes a salvage reaction resulting in the formation of AMP, that is energically less costly than de novo synthesis. The polypeptide is Adenine phosphoribosyltransferase (Aprt) (Drosophila pseudoobscura pseudoobscura (Fruit fly)).